Reading from the N-terminus, the 224-residue chain is UPF0758 protein Neut_0782 (224 aa).

Residues 102-224 (IMDSPQSVRS…TVSFAERGLI (123 aa)) form the MPN domain. Residues His-173, His-175, and Asp-186 each coordinate Zn(2+). The short motif at 173–186 (HNHPSGVAEPSRAD) is the JAMM motif element.

The protein belongs to the UPF0758 family.

This chain is UPF0758 protein Neut_0782, found in Nitrosomonas eutropha (strain DSM 101675 / C91 / Nm57).